A 133-amino-acid polypeptide reads, in one-letter code: Capsid protein (133 aa).

It belongs to the Leviviricetes capsid protein family. Homodimer. The capsid protein dimer binds to the viral RNA via an operator hairpin, but also many other RNA sequences in the viral genome.

The protein resides in the virion. In terms of biological role, capsid protein self-assembles to form an icosahedral capsid with a T=3 symmetry, about 26 nm in diameter, and consisting of 89 capsid proteins dimers (178 capsid proteins). Involved in viral genome encapsidation through the interaction between a capsid protein dimer and the multiple packaging signals present in the RNA genome. Binding of the capsid proteins to the viral RNA induces a conformational change required for efficient T=3 shell formation. The capsid also contains 1 copy of the A2 maturation protein. Its function is as follows. Acts as a translational repressor of viral replicase synthesis late in infection. This latter function is the result of capsid protein interaction with an RNA hairpin which contains the replicase ribosome-binding site. The chain is Capsid protein from Escherichia coli.